The following is a 139-amino-acid chain: D-ribose pyranase (139 aa).

His20 (proton donor) is an active-site residue. Residues Asp28, His106, and 128–130 (YAN) contribute to the substrate site.

The protein belongs to the RbsD / FucU family. RbsD subfamily. As to quaternary structure, homodecamer.

It is found in the cytoplasm. It carries out the reaction beta-D-ribopyranose = beta-D-ribofuranose. It participates in carbohydrate metabolism; D-ribose degradation; D-ribose 5-phosphate from beta-D-ribopyranose: step 1/2. In terms of biological role, catalyzes the interconversion of beta-pyran and beta-furan forms of D-ribose. This Haemophilus influenzae (strain PittGG) protein is D-ribose pyranase.